Here is a 551-residue protein sequence, read N- to C-terminus: Peptidyl-prolyl cis-trans isomerase-like 4 (551 aa).

A PPIase cyclophilin-type domain is found at 1–185 (MSVLLETSLG…RDIRIRHVVV (185 aa)). A disordered region spans residues 54-88 (GDPSNTGKGGASIWSQLPSTSQDSSTSTYFTPESS). Polar residues predominate over residues 66 to 88 (IWSQLPSTSQDSSTSTYFTPESS). The RRM domain occupies 262–340 (NILFVCKLNP…RRIWVDFSQS (79 aa)). Residues 352-551 (RNAGSDAPRA…RQRSRDGSRR (200 aa)) are disordered. Basic and acidic residues-rich tracts occupy residues 384–397 (KRGD…RDQP) and 408–454 (SRQD…SHRD). Positions 455-464 (HERHHLSRHV) are enriched in basic residues. Over residues 465–551 (RPSDEGESKC…RQRSRDGSRR (87 aa)) the composition is skewed to basic and acidic residues.

Belongs to the cyclophilin-type PPIase family. PPIL4 subfamily.

Its subcellular location is the nucleus. It carries out the reaction [protein]-peptidylproline (omega=180) = [protein]-peptidylproline (omega=0). Its function is as follows. PPIases accelerate the folding of proteins. It catalyzes the cis-trans isomerization of proline imidic peptide bonds in oligopeptides. The chain is Peptidyl-prolyl cis-trans isomerase-like 4 (CYP6) from Mycosarcoma maydis (Corn smut fungus).